The following is a 481-amino-acid chain: Aspartyl/glutamyl-tRNA(Asn/Gln) amidotransferase subunit B (481 aa).

The protein belongs to the GatB/GatE family. GatB subfamily. As to quaternary structure, heterotrimer of A, B and C subunits.

It catalyses the reaction L-glutamyl-tRNA(Gln) + L-glutamine + ATP + H2O = L-glutaminyl-tRNA(Gln) + L-glutamate + ADP + phosphate + H(+). The catalysed reaction is L-aspartyl-tRNA(Asn) + L-glutamine + ATP + H2O = L-asparaginyl-tRNA(Asn) + L-glutamate + ADP + phosphate + 2 H(+). Functionally, allows the formation of correctly charged Asn-tRNA(Asn) or Gln-tRNA(Gln) through the transamidation of misacylated Asp-tRNA(Asn) or Glu-tRNA(Gln) in organisms which lack either or both of asparaginyl-tRNA or glutaminyl-tRNA synthetases. The reaction takes place in the presence of glutamine and ATP through an activated phospho-Asp-tRNA(Asn) or phospho-Glu-tRNA(Gln). The polypeptide is Aspartyl/glutamyl-tRNA(Asn/Gln) amidotransferase subunit B (Pseudomonas fluorescens (strain SBW25)).